The chain runs to 35 residues: Dermonecrotic toxin LrSicTox-alphaI-1 (35 aa).

The active site involves H11. Residue D33 participates in Mg(2+) binding.

The protein belongs to the arthropod phospholipase D family. Class II subfamily. Requires Mg(2+) as cofactor. In terms of processing, contains 2 disulfide bonds. As to expression, expressed by the venom gland.

It is found in the secreted. It carries out the reaction an N-(acyl)-sphingosylphosphocholine = an N-(acyl)-sphingosyl-1,3-cyclic phosphate + choline. The catalysed reaction is an N-(acyl)-sphingosylphosphoethanolamine = an N-(acyl)-sphingosyl-1,3-cyclic phosphate + ethanolamine. The enzyme catalyses a 1-acyl-sn-glycero-3-phosphocholine = a 1-acyl-sn-glycero-2,3-cyclic phosphate + choline. It catalyses the reaction a 1-acyl-sn-glycero-3-phosphoethanolamine = a 1-acyl-sn-glycero-2,3-cyclic phosphate + ethanolamine. Functionally, dermonecrotic toxins cleave the phosphodiester linkage between the phosphate and headgroup of certain phospholipids (sphingolipid and lysolipid substrates), forming an alcohol (often choline) and a cyclic phosphate. This toxin acts on sphingomyelin (SM). It may also act on ceramide phosphoethanolamine (CPE), lysophosphatidylcholine (LPC) and lysophosphatidylethanolamine (LPE), but not on lysophosphatidylserine (LPS), and lysophosphatidylglycerol (LPG). It acts by transphosphatidylation, releasing exclusively cyclic phosphate products as second products. Induces dermonecrosis, hemolysis, increased vascular permeability, edema, inflammatory response, and platelet aggregation. This is Dermonecrotic toxin LrSicTox-alphaI-1 from Loxosceles reclusa (Brown recluse spider).